The following is a 245-amino-acid chain: Flavin-dependent thymidylate synthase (245 aa).

In terms of domain architecture, ThyX spans 5-210 (IRVKLVNYTK…ELRPIIKWAK (206 aa)). FAD contacts are provided by residues serine 59, 83–85 (RHR), and glutamine 91. DUMP-binding positions include 80–83 (QLVR), 91–95 (QQSQR), and arginine 149. A ThyX motif motif is present at residues 83–93 (RHRLASYTQQS). Residues 165 to 167 (NLR) and histidine 171 each bind FAD. DUMP is bound at residue arginine 176. The active-site Involved in ionization of N3 of dUMP, leading to its activation is arginine 176.

Belongs to the thymidylate synthase ThyX family. As to quaternary structure, homotetramer. FAD is required as a cofactor.

It carries out the reaction dUMP + (6R)-5,10-methylene-5,6,7,8-tetrahydrofolate + NADPH + H(+) = dTMP + (6S)-5,6,7,8-tetrahydrofolate + NADP(+). The protein operates within pyrimidine metabolism; dTTP biosynthesis. Its function is as follows. Catalyzes the reductive methylation of 2'-deoxyuridine-5'-monophosphate (dUMP) to 2'-deoxythymidine-5'-monophosphate (dTMP) while utilizing 5,10-methylenetetrahydrofolate (mTHF) as the methyl donor, and NADPH and FADH(2) as the reductant. The polypeptide is Flavin-dependent thymidylate synthase (Thermococcus kodakarensis (strain ATCC BAA-918 / JCM 12380 / KOD1) (Pyrococcus kodakaraensis (strain KOD1))).